Reading from the N-terminus, the 138-residue chain is Large ribosomal subunit protein eL32 (138 aa).

Belongs to the eukaryotic ribosomal protein eL32 family.

The protein is Large ribosomal subunit protein eL32 (rpl32e) of Saccharolobus solfataricus (strain ATCC 35092 / DSM 1617 / JCM 11322 / P2) (Sulfolobus solfataricus).